Here is a 73-residue protein sequence, read N- to C-terminus: MRTIISLLLLSAMVFAEIEAISLEEGLQLFEGERGCVGENQQCANWAGPHCCSGYYCTCRYFPKCICRKDSGK.

Residues 1–20 (MRTIISLLLLSAMVFAEIEA) form the signal peptide. Residues 21-34 (ISLEEGLQLFEGER) constitute a propeptide that is removed on maturation. Disulfide bonds link cysteine 36–cysteine 52, cysteine 43–cysteine 57, cysteine 51–cysteine 67, and cysteine 59–cysteine 65. Serine 71 bears the Serine amide mark.

It belongs to the neurotoxin 07 (Beta/delta-agtx) family. 03 (aga-4) subfamily. Aga sub-subfamily. As to expression, expressed by the venom gland.

The protein resides in the secreted. Insecticidal neurotoxin that induces an irreversible spastic paralysis when injected into insects. Modifies presynaptic voltage-gated sodium channels (Nav), causing them to open at the normal resting potential of the nerve. This leads to spontaneous release of neurotransmitter and repetitive action potentials in motor neurons. The protein is U3-agatoxin-Ao1i of Agelena orientalis (Funnel-web spider).